Here is a 212-residue protein sequence, read N- to C-terminus: 3-demethoxyubiquinol 3-hydroxylase (212 aa).

The Fe cation site is built by glutamate 61, glutamate 91, histidine 94, glutamate 143, glutamate 175, and histidine 178.

Belongs to the COQ7 family. The cofactor is Fe cation.

Its subcellular location is the cell membrane. It catalyses the reaction a 5-methoxy-2-methyl-3-(all-trans-polyprenyl)benzene-1,4-diol + AH2 + O2 = a 3-demethylubiquinol + A + H2O. The protein operates within cofactor biosynthesis; ubiquinone biosynthesis. Functionally, catalyzes the hydroxylation of 2-nonaprenyl-3-methyl-6-methoxy-1,4-benzoquinol during ubiquinone biosynthesis. In Paraburkholderia phytofirmans (strain DSM 17436 / LMG 22146 / PsJN) (Burkholderia phytofirmans), this protein is 3-demethoxyubiquinol 3-hydroxylase.